The chain runs to 376 residues: Protein STRICTOSIDINE SYNTHASE-LIKE 8 (376 aa).

A signal peptide spans 1–31 (MPISRRVLTPITAAPVILAVLCFFFWSSIIG). Residues asparagine 98, asparagine 172, and asparagine 224 are each glycosylated (N-linked (GlcNAc...) asparagine).

The protein belongs to the strictosidine synthase family.

The protein localises to the vacuole. In Arabidopsis thaliana (Mouse-ear cress), this protein is Protein STRICTOSIDINE SYNTHASE-LIKE 8.